A 305-amino-acid chain; its full sequence is Peroxisome biogenesis factor 2 (305 aa).

Over 1-15 (MAAREESTQSANRVL) the chain is Peroxisomal matrix. A helical membrane pass occupies residues 16-42 (RISQLDALELNKALEQLVWSQFTQCFH). Over 43–48 (GFKPGL) the chain is Cytoplasmic. The helical transmembrane segment at 49–74 (LARFEPEVKAFLWLFLWRFTIYSKNA) threads the bilayer. At 75–98 (TVGQSVLNIQHKNDSSPNPVYQPP) the chain is on the peroxisomal matrix side. A helical membrane pass occupies residues 99–125 (SKNQKLLYAVCTIGGRWLEERCYDLFR). Over 126–133 (NRHLASFG) the chain is Cytoplasmic. The chain crosses the membrane as a helical span at residues 134–160 (KAKQCMNFVVGLLKLGELMNFLIFLQK). Over 161–187 (GKFATLTERLLGIHSVFCKPQNMREVG) the chain is Peroxisomal matrix. The helical transmembrane segment at 188 to 211 (FEYMNRELLWHGFAEFLIFLLPLI) threads the bilayer. Residues 212-305 (NIQKLKAKLS…GIQMSEVNAL (94 aa)) lie on the Cytoplasmic side of the membrane. Cysteine 244, cysteine 247, cysteine 259, histidine 261, cysteine 264, cysteine 267, cysteine 280, and cysteine 283 together coordinate Zn(2+). The RING-type zinc finger occupies 244-284 (CALCGEWPTMPHTIGCEHVFCYYCVKSSFLFDIYFTCPKCG).

The protein belongs to the pex2/pex10/pex12 family. As to quaternary structure, component of the PEX2-PEX10-PEX12 retrotranslocation channel, composed of PEX2, PEX10 and PEX12. Forms intramolecular and intermolecular disulfide bonds in response to reactive oxygen species (ROS), promoting higher stability.

It is found in the peroxisome membrane. It catalyses the reaction [E2 ubiquitin-conjugating enzyme]-S-ubiquitinyl-L-cysteine + [acceptor protein]-L-cysteine = [E2 ubiquitin-conjugating enzyme]-L-cysteine + [acceptor protein]-S-ubiquitinyl-L-cysteine.. The catalysed reaction is S-ubiquitinyl-[E2 ubiquitin-conjugating enzyme]-L-cysteine + [acceptor protein]-L-lysine = [E2 ubiquitin-conjugating enzyme]-L-cysteine + N(6)-ubiquitinyl-[acceptor protein]-L-lysine.. It functions in the pathway protein modification; protein ubiquitination. E3 ubiquitin-protein ligase component of a retrotranslocation channel required for peroxisome organization by mediating export of the PEX5 receptor from peroxisomes to the cytosol, thereby promoting PEX5 recycling. The retrotranslocation channel is composed of PEX2, PEX10 and PEX12; each subunit contributing transmembrane segments that coassemble into an open channel that specifically allows the passage of PEX5 through the peroxisomal membrane. PEX2 also regulates peroxisome organization by acting as a E3 ubiquitin-protein ligase. PEX2 ubiquitinates PEX5 during its passage through the retrotranslocation channel: catalyzes monoubiquitination of PEX5 at 'Cys-11', a modification that acts as a signal for PEX5 extraction into the cytosol. Required for pexophagy in response to starvation by mediating ubiquitination of peroxisomal proteins, such as PEX5 and ABCD3/PMP70. Also involved in the response to reactive oxygen species (ROS) by mediating 'Lys-48'-linked polyubiquitination and subsequent degradation of PNPLA2/ATGL, thereby regulating lipolysis. This is Peroxisome biogenesis factor 2 from Mus musculus (Mouse).